Consider the following 482-residue polypeptide: UDP-N-acetylmuramate--L-alanine ligase (482 aa).

Residue 129 to 135 (GTHGKTT) participates in ATP binding.

This sequence belongs to the MurCDEF family.

It localises to the cytoplasm. It carries out the reaction UDP-N-acetyl-alpha-D-muramate + L-alanine + ATP = UDP-N-acetyl-alpha-D-muramoyl-L-alanine + ADP + phosphate + H(+). The protein operates within cell wall biogenesis; peptidoglycan biosynthesis. Functionally, cell wall formation. This Acinetobacter baylyi (strain ATCC 33305 / BD413 / ADP1) protein is UDP-N-acetylmuramate--L-alanine ligase.